A 520-amino-acid polypeptide reads, in one-letter code: Trichothecene O-acetyltransferase TRI3 (520 aa).

The segment at 1–23 (MGSKLPELPKLSPEKHRWEKSNV) is disordered. Basic and acidic residues predominate over residues 12–23 (SPEKHRWEKSNV).

Belongs to the trichothecene O-acetyltransferase family.

The protein operates within sesquiterpene biosynthesis; trichothecene biosynthesis. Functionally, trichothecene O-acetyltransferase; part of the gene cluster that mediates the production of the antimicrobial trichothecene harzianum A (HA) that plays a role in Botrytis cinerea antagonistic activity and plant defense priming. The biosynthesis of harzianum A begins with the cyclization of farnesyl diphosphate to trichodiene and is catalyzed by the trichodiene synthase TRI5. Trichodiene undergoes a series of oxygenations catalyzed by the cytochrome P450 monooxygenase TRI4. TRI4 controls the addition of 3 oxygens at C-2, C-11, and the C-12, C-13-epoxide to form the intermediate isotrichodiol. Isotrichodiol then undergoes a non-enzymatic isomerization and cyclization to form 12,13-epoxytrichothec-9-ene (EPT) which is further converted to trichodermol by the cytochrome P450 monooxygenase TRI11 via C-4 hydroxylation. The last step of HA synthesis is esterification of an octatriendioyl moiety to the C-4 oxygen of trichodermol. The octatriendioyl moiety is probably produced by the polyketide synthase TRI17 and the esterification performed by the trichothecene O-acetyltransferase TRI3. The polypeptide is Trichothecene O-acetyltransferase TRI3 (Trichoderma arundinaceum).